The sequence spans 73 residues: MSDVLIRDIPDDVLASLDAIAARLGLSRTEYIRRRLAQDAQTARVTVTAADLRRLRGAVAGLGDPELMRQAWR.

In terms of assembly, forms a homodimer, which binds to a toxin homodimer, which then oligomerizes further to a hetero-octamer. When bound to toxin VapC2 the toxin activity is inhibited; 1 antitoxin may suffice to inhibit toxin.

Antitoxin component of a type II toxin-antitoxin (TA) system. Upon expression in M.smegmatis neutralizes the effect of cognate toxin VapC2. The C-terminal helix of the antitoxin may obstruct the toxin's RNA-binding groove, blocking access to the active sites. Additionally, the C-terminal arginine of the antitoxin may remove Mg(2+) ions from the toxin active sites. This Mycobacterium tuberculosis (strain ATCC 25618 / H37Rv) protein is Antitoxin VapB2 (vapB2).